The following is a 200-amino-acid chain: Probable DNA-directed RNA polymerase subunit delta (200 aa).

The HTH HARE-type domain occupies 19-88 (LSMIEVARAI…GDNKWGLRSW (70 aa)). Acidic residues-rich tracts occupy residues 125–143 (DSDAIDYNADDPEDEDAYE) and 150–200 (YDDE…TSEE). Positions 125 to 200 (DSDAIDYNAD…SDDDAETSEE (76 aa)) are disordered.

Belongs to the RpoE family. As to quaternary structure, RNAP is composed of a core of 2 alpha, a beta and a beta' subunits. The core is associated with a delta subunit and one of several sigma factors.

Its function is as follows. Participates in both the initiation and recycling phases of transcription. In the presence of the delta subunit, RNAP displays an increased specificity of transcription, a decreased affinity for nucleic acids, and an increased efficiency of RNA synthesis because of enhanced recycling. The sequence is that of Probable DNA-directed RNA polymerase subunit delta from Streptococcus pneumoniae serotype 4 (strain ATCC BAA-334 / TIGR4).